The primary structure comprises 442 residues: Transcription factor AP-2-epsilon (442 aa).

The short motif at 54-59 (YFPPPY) is the PPxY motif element. Ser246 carries the post-translational modification Phosphoserine; by PKA. The H-S-H (helix-span-helix), dimerization stretch occupies residues 287–417 (RRKAANVTLL…YLLESLKGLD (131 aa)).

The protein belongs to the AP-2 family. In terms of assembly, binds DNA as a dimer. Can form homodimers or heterodimers with other AP-2 family members. Expressed in skin, primary keratinocytes, immortalized keratinocytes, and HeLa cell line.

The protein resides in the nucleus. Its function is as follows. Sequence-specific DNA-binding protein that interacts with inducible viral and cellular enhancer elements to regulate transcription of selected genes. AP-2 factors bind to the consensus sequence 5'-GCCNNNGGC-3' and activate genes involved in a large spectrum of important biological functions including proper eye, face, body wall, limb and neural tube development. They also suppress a number of genes including MCAM/MUC18, C/EBP alpha and MYC. AP-2-epsilon may play a role in the development of the CNS and in cartilage differentiation. The chain is Transcription factor AP-2-epsilon from Homo sapiens (Human).